A 333-amino-acid chain; its full sequence is Ketol-acid reductoisomerase (NADP(+)) (333 aa).

The KARI N-terminal Rossmann domain occupies 2-182 (ANIYYDSDCD…GGGRAGILET (181 aa)). NADP(+) contacts are provided by residues 25-28 (YGSQ), Lys-48, Ser-51, Ser-53, and 83-86 (DTIQ). His-108 is an active-site residue. Gly-134 serves as a coordination point for NADP(+). Positions 183–331 (SFREETETDL…KKLRSMMKWL (149 aa)) constitute a KARI C-terminal knotted domain. Residues Asp-191, Glu-195, Glu-227, and Glu-231 each coordinate Mg(2+). Ser-252 lines the substrate pocket.

The protein belongs to the ketol-acid reductoisomerase family. Mg(2+) is required as a cofactor.

It carries out the reaction (2R)-2,3-dihydroxy-3-methylbutanoate + NADP(+) = (2S)-2-acetolactate + NADPH + H(+). The catalysed reaction is (2R,3R)-2,3-dihydroxy-3-methylpentanoate + NADP(+) = (S)-2-ethyl-2-hydroxy-3-oxobutanoate + NADPH + H(+). Its pathway is amino-acid biosynthesis; L-isoleucine biosynthesis; L-isoleucine from 2-oxobutanoate: step 2/4. It participates in amino-acid biosynthesis; L-valine biosynthesis; L-valine from pyruvate: step 2/4. Involved in the biosynthesis of branched-chain amino acids (BCAA). Catalyzes an alkyl-migration followed by a ketol-acid reduction of (S)-2-acetolactate (S2AL) to yield (R)-2,3-dihydroxy-isovalerate. In the isomerase reaction, S2AL is rearranged via a Mg-dependent methyl migration to produce 3-hydroxy-3-methyl-2-ketobutyrate (HMKB). In the reductase reaction, this 2-ketoacid undergoes a metal-dependent reduction by NADPH to yield (R)-2,3-dihydroxy-isovalerate. The chain is Ketol-acid reductoisomerase (NADP(+)) from Leptospira interrogans serogroup Icterohaemorrhagiae serovar copenhageni (strain Fiocruz L1-130).